Reading from the N-terminus, the 113-residue chain is Hydrogenase maturation factor HypA (113 aa).

H2 serves as a coordination point for Ni(2+). Residues C73, C76, C89, and C92 each coordinate Zn(2+).

The protein belongs to the HypA/HybF family.

Functionally, involved in the maturation of [NiFe] hydrogenases. Required for nickel insertion into the metal center of the hydrogenase. The protein is Hydrogenase maturation factor HypA of Legionella pneumophila subsp. pneumophila (strain Philadelphia 1 / ATCC 33152 / DSM 7513).